A 210-amino-acid polypeptide reads, in one-letter code: Syntaxin-binding protein 6 (210 aa).

S2 carries the post-translational modification N-acetylserine. Residues 151 to 210 form the v-SNARE coiled-coil homology domain; sequence GNSILHSAADSVTSAVQKASQALNERGERLGRAEEKTEDLKNSAQQFAETAHKLAMKHKC.

In terms of assembly, part of a ternary complex containing SNAP25 and STX1A that can be dissociated by NAPA and NSF. Interacts with STX4A.

Its subcellular location is the cytoplasm. The protein localises to the membrane. Functionally, forms non-fusogenic complexes with SNAP25 and STX1A and may thereby modulate the formation of functional SNARE complexes and exocytosis. The sequence is that of Syntaxin-binding protein 6 (STXBP6) from Bos taurus (Bovine).